Consider the following 465-residue polypeptide: Probable Xaa-Pro aminopeptidase PEPP (465 aa).

Residues Asp259, Asp270, Glu395, and Glu435 each contribute to the Mn(2+) site.

The protein belongs to the peptidase M24B family. It depends on Mn(2+) as a cofactor.

It carries out the reaction Release of any N-terminal amino acid, including proline, that is linked to proline, even from a dipeptide or tripeptide.. Its function is as follows. Catalyzes the removal of a penultimate prolyl residue from the N-termini of peptides. This is Probable Xaa-Pro aminopeptidase PEPP (PEPP) from Pyricularia oryzae (strain 70-15 / ATCC MYA-4617 / FGSC 8958) (Rice blast fungus).